We begin with the raw amino-acid sequence, 120 residues long: MAGVKTFELRTKSKEQLESQLVELKQELATLKVQKLQRPSLPRIHTVRKNIARVLTVINLNQRENVRAFYAGKKYIPKDLRAKKTRALRRKLTKFEASQETEKARKQRIAFPQRKFAIKA.

Belongs to the universal ribosomal protein uL29 family. As to quaternary structure, component of the large ribosomal subunit. Mature ribosomes consist of a small (40S) and a large (60S) subunit. The 40S subunit contains about 32 different proteins and 1 molecule of RNA (18S). The 60S subunit contains 45 different proteins and 3 molecules of RNA (25S, 5.8S and 5S).

It localises to the cytoplasm. In terms of biological role, component of the ribosome, a large ribonucleoprotein complex responsible for the synthesis of proteins in the cell. The small ribosomal subunit (SSU) binds messenger RNAs (mRNAs) and translates the encoded message by selecting cognate aminoacyl-transfer RNA (tRNA) molecules. The large subunit (LSU) contains the ribosomal catalytic site termed the peptidyl transferase center (PTC), which catalyzes the formation of peptide bonds, thereby polymerizing the amino acids delivered by tRNAs into a polypeptide chain. The nascent polypeptides leave the ribosome through a tunnel in the LSU and interact with protein factors that function in enzymatic processing, targeting, and the membrane insertion of nascent chains at the exit of the ribosomal tunnel. This Candida albicans (strain SC5314 / ATCC MYA-2876) (Yeast) protein is Large ribosomal subunit protein uL29.